We begin with the raw amino-acid sequence, 306 residues long: Lipid A biosynthesis lauroyltransferase (306 aa).

The chain crosses the membrane as a helical span at residues Trp-17–Ile-37. Residues His-132 to Glu-137 carry the HXXXXD motif motif.

The protein belongs to the LpxL/LpxM/LpxP family. In terms of assembly, monomer.

The protein resides in the cell inner membrane. It catalyses the reaction dodecanoyl-[ACP] + alpha-Kdo-(2-&gt;4)-alpha-Kdo-(2-&gt;6)-lipid IVA (E. coli) = alpha-Kdo-(2-&gt;4)-alpha-Kdo-(2-&gt;6)-(dodecanoyl)-lipid IVA (E. coli) + holo-[ACP]. It functions in the pathway glycolipid biosynthesis; KDO(2)-lipid A biosynthesis; KDO(2)-lipid A from CMP-3-deoxy-D-manno-octulosonate and lipid IV(A): step 3/4. It participates in bacterial outer membrane biogenesis; lipopolysaccharide biosynthesis. In terms of biological role, catalyzes the transfer of laurate from lauroyl-[acyl-carrier-protein] (ACP) to Kdo(2)-lipid IV(A) to form Kdo(2)-(lauroyl)-lipid IV(A). Has 10 fold selectivity for lauroyl-ACP over myristoyl-ACP. In vitro, can also catalyze a slow second acylation reaction leading to the formation of Kdo(2)-(dilauroyl)-lipid IV(A). The chain is Lipid A biosynthesis lauroyltransferase from Escherichia coli (strain K12).